Reading from the N-terminus, the 195-residue chain is MRQAEVTRDTLETRITARVDLDGSGKAAFATGVPFLDHMLDQIARHGAFDLDIRAEGDTHIDDHHTVEDVGITLGQAFARALGDKRGIRRYGHAYVPLDEALSRVVVDFSGRPGLHYFVSYTRARIGSFDVDLAREFFQGFVNHAGVTLHIDSLRGDNAHHQCETIFKAFGRALRMAAERDERAAGAIPSTKGAL.

The protein belongs to the imidazoleglycerol-phosphate dehydratase family.

Its subcellular location is the cytoplasm. It carries out the reaction D-erythro-1-(imidazol-4-yl)glycerol 3-phosphate = 3-(imidazol-4-yl)-2-oxopropyl phosphate + H2O. It participates in amino-acid biosynthesis; L-histidine biosynthesis; L-histidine from 5-phospho-alpha-D-ribose 1-diphosphate: step 6/9. The sequence is that of Imidazoleglycerol-phosphate dehydratase from Aromatoleum aromaticum (strain DSM 19018 / LMG 30748 / EbN1) (Azoarcus sp. (strain EbN1)).